We begin with the raw amino-acid sequence, 393 residues long: NAD(P)H-quinone oxidoreductase subunit H, chloroplastic (393 aa).

This sequence belongs to the complex I 49 kDa subunit family. NDH is composed of at least 16 different subunits, 5 of which are encoded in the nucleus.

It is found in the plastid. Its subcellular location is the chloroplast thylakoid membrane. It carries out the reaction a plastoquinone + NADH + (n+1) H(+)(in) = a plastoquinol + NAD(+) + n H(+)(out). It catalyses the reaction a plastoquinone + NADPH + (n+1) H(+)(in) = a plastoquinol + NADP(+) + n H(+)(out). In terms of biological role, NDH shuttles electrons from NAD(P)H:plastoquinone, via FMN and iron-sulfur (Fe-S) centers, to quinones in the photosynthetic chain and possibly in a chloroplast respiratory chain. The immediate electron acceptor for the enzyme in this species is believed to be plastoquinone. Couples the redox reaction to proton translocation, and thus conserves the redox energy in a proton gradient. This is NAD(P)H-quinone oxidoreductase subunit H, chloroplastic from Daucus carota (Wild carrot).